The chain runs to 1463 residues: MDPPSKKRSIFGGITSLFRSSTAPPEDRKGKSTNSNSVTANAPSLPPPQPESNGASSPFSPAKRASEAQLSVRKIIPKPQGPSSKLSQSVSASEIAHRPAPSTPAPAAATPVPKRRPGDNPHKLAASTSTPALQNLPNPPAPATSSKATSFSGAPSTPRPSIFRNSLYARPAPATTYTQRVSSHPLTQSFPPVTPGRPGRAANVDINNRILSNTASTELFPMKIPEPPRHLTGEMLAKEVPEDPNRAGSIYADEYLAHLCPPEFDDLQRRQFFCILDLRRLKYAADEVFLKKDWKINILNFAKEYEKSRSLIMLRYGLYEFKTVRASEAVKREWKLKHGIPDSDDESGAPAKTNGGGKRKAEEDLEPSSSTFTHTASPNKRARATEAPATNKRKANDELEEESQPSKLQKPGSPSPAKTPSATKSVFESIANKTASPQTAPKSSLFSSSTAAKPNGSIFDNAQKTPATSSNIFGHLSDASKDEDNESDTGSEAEAEDETPAKKKKKTTVNGASSSAPSEGGESTQSRSIFDRITRDANGQPVRQLPEGGLFSGESRKRSLSPVKELPANNTWNASAGIKFATPGTSSIFGSSNPKPPATTDTIDFAASTTKKPEEAAAPAEAPKEATPTTNLFGAQTKATEEAPKPAATNIFGSTTNPTETSIPAGSLFSAKPATSTTNSLFGATTSAAGQKKDEESKPTEAAPAPAPATSTLFGAKPATTESPKTNLFQFGTPNKTETAPATQPQFGGLFGKPPSTETPTEKPATTSLFGTDASKPATTSSLFGSATTAADKPAATNLFGSTTTPADKPTTTNLFGSTSTQATSGSDEPTAKKFAFGGTTESKPTTSLFGSTTPAPATSTENKGGLFGATTTSATPATNTKPLFGSTPAPAQENKPLFGSSTTTAAPVFQFGSTPASTSTEQKPLFGATAATDSKPLFGSTSATSTEQKPLFGSSTTMTEQKPLFGSISTTATEQKPLFGSTSTTEAKPLFGAAPASTEQKSLFGITPSTTENNPASIFGNSSTSTEQKPLFGSAPASTEQKPLFGSTPSTTENKPAGLFGNTSTTSTSTPLFNFGSQNTTASQPSTTGSIFGSASASFTFTAGGSDGTIKNPFASDGSYSAPTSFNFGSGDSQSSSAPFTFGAGGGTPSFTFGASSDSSNASNNASSAPIFSFGASQPSSTPLFGQNNPPAASNIFASSLAPVGGTSTGTSKHVPSFLESENKASAYSSLDSPFTFGGASSLATTPAASTPEPSAANAAAAGEDQGASADADEQPQEQISLTDGGPGEEDESVVHEVRAKAVKLVTAADSSADSSNGSGEKPAEKKSNSPWKVMGVGPLRLLKHKQTGAVRMLLRAEPRGNIALNKLVLPQFTYKPDAATPKFIKFAAARDDGKGLETWMIQVKTPQLAQELAAALEEHKKANEKKDGEKNEESEKKDEKQEEKKNEEKKDEKEEKKDEKK.

Disordered stretches follow at residues 1 to 199, 339 to 568, and 609 to 1064; these read MDPP…GRPG, GIPD…ELPA, and TTKK…FGNT. Composition is skewed to polar residues over residues 32-42, 81-92, 144-155, 175-191, 367-378, and 416-472; these read STNSNSVTANA, GPSSKLSQSVSA, TSSKATSFSGAP, TTYT…QSFP, PSSSTFTHTASP, and PAKT…SSNI. Acidic residues predominate over residues 481–498; the sequence is KDEDNESDTGSEAEAEDE. Low complexity-rich tracts occupy residues 511–523 and 616–630; these read GASS…GGES and AAAP…TPTT. Polar residues-rich tracts occupy residues 651–664, 673–689, and 720–746; these read IFGS…TSIP, PATS…TSAA, and TTES…TQPQ. Residues 729–732 form an FXFG 1 repeat; sequence FQFG. Positions 753 to 768 are enriched in low complexity; it reads KPPSTETPTEKPATTS. Residues 777 to 789 show a composition bias toward polar residues; the sequence is PATTSSLFGSATT. The span at 803-813 shows a compositional bias: low complexity; the sequence is TTTPADKPTTT. Over residues 814–828 the composition is skewed to polar residues; the sequence is NLFGSTSTQATSGSD. The stretch at 835 to 838 is one FXFG 2 repeat; that stretch reads FAFG. The segment covering 840-863 has biased composition (polar residues); sequence TTESKPTTSLFGSTTPAPATSTEN. The span at 870 to 881 shows a compositional bias: low complexity; that stretch reads ATTTSATPATNT. 5 stretches are compositionally biased toward polar residues: residues 900–923, 940–961, 968–987, 998–1029, and 1037–1055; these read GSST…STEQ, GSTS…TMTE, SIST…STTE, STEQ…STEQ, and PAST…TTEN. The FXFG 3 repeat unit spans residues 910-913; the sequence is FQFG. FXFG repeat units lie at residues 1074-1077, 1127-1130, 1141-1144, and 1152-1155; these read FNFG and FTFG. Disordered stretches follow at residues 1155–1174 and 1179–1217; these read GASS…PIFS and QPSS…KHVP. Residues 1156–1170 are compositionally biased toward low complexity; it reads ASSDSSNASNNASSA. The FXFG 8 repeat unit spans residues 1173–1176; that stretch reads FSFG. Residues 1179 to 1199 are compositionally biased toward polar residues; sequence QPSSTPLFGQNNPPAASNIFA. An FXFG 9 repeat occupies 1236–1239; the sequence is FTFG. Over residues 1240 to 1271 the composition is skewed to low complexity; the sequence is GASSLATTPAASTPEPSAANAAAAGEDQGASA. Disordered regions lie at residues 1240–1335 and 1416–1463; these read GASS…PWKV and AALE…DEKK. The region spanning 1289-1427 is the RanBD1 domain; sequence GEEDESVVHE…LEEHKKANEK (139 aa). A compositionally biased stretch (basic and acidic residues) spans 1418–1463; it reads LEEHKKANEKKDGEKNEESEKKDEKQEEKKNEEKKDEKEEKKDEKK.

In terms of assembly, the nuclear pore complex (NPC) constitutes the exclusive means of nucleocytoplasmic transport. NPCs allow the passive diffusion of ions and small molecules and the active, nuclear transport receptor-mediated bidirectional transport of macromolecules such as proteins, RNAs, ribonucleoparticles (RNPs), and ribosomal subunits across the nuclear envelope. The 55-60 MDa NPC is composed of at least 28 different subunits: AMO1, ELYS, GLE1, GLE2, MLP1, NDC1, NIC96, NSP1, NUP133, NUP145, NUP152, NUP159, NUP170, NUP188, NUP192, NUP37, NUP49, NUP53, NUP56, NUP57, NUP82, NUP84, NUP85, POM152, POM33, POM34, SEC13 and SEH1. Due to its 8-fold rotational symmetry, all subunits are present with 8 copies or multiples thereof.

The protein resides in the nucleus. It is found in the nuclear pore complex. It localises to the nucleus membrane. In terms of biological role, functions as a component of the nuclear pore complex (NPC). NPC components, collectively referred to as nucleoporins (NUPs), can play the role of both NPC structural components and of docking or interaction partners for transiently associated nuclear transport factors. Active directional transport is assured by both, a Phe-Gly (FG) repeat affinity gradient for these transport factors across the NPC and a transport cofactor concentration gradient across the nuclear envelope (GSP1 and GSP2 GTPases associated predominantly with GTP in the nucleus, with GDP in the cytoplasm). The chain is Nucleoporin NUP152 (NUP152) from Chaetomium thermophilum (strain DSM 1495 / CBS 144.50 / IMI 039719) (Thermochaetoides thermophila).